A 179-amino-acid chain; its full sequence is Fas apoptotic inhibitory molecule 1 (179 aa).

Thr2 bears the N-acetylthreonine mark.

The protein belongs to the FAIM1 family.

It is found in the cytoplasm. Plays a role as an inducible effector molecule that mediates Fas resistance produced by surface Ig engagement in B cells. The chain is Fas apoptotic inhibitory molecule 1 (FAIM) from Homo sapiens (Human).